A 389-amino-acid chain; its full sequence is Monomeric sarcosine oxidase (389 aa).

Residue 8 to 38 (DVIVVGAGSMGMAAGYYLSKQGVKTLLVDSF) participates in FAD binding. Cys-318 bears the S-8alpha-FAD cysteine mark.

Belongs to the MSOX/MTOX family. MSOX subfamily. Monomer. It depends on FAD as a cofactor.

It is found in the cytoplasm. It carries out the reaction sarcosine + O2 + H2O = formaldehyde + glycine + H2O2. Catalyzes the oxidative demethylation of sarcosine. This is Monomeric sarcosine oxidase (soxA) from Arthrobacter sp. (strain TE1826).